A 79-amino-acid chain; its full sequence is Putative defensin-like protein 137 (79 aa).

The signal sequence occupies residues 1 to 24 (MKKYFQPSFVILIIFTVLVLGVVG). Intrachain disulfides connect Cys33–Cys78, Cys42–Cys62, Cys47–Cys72, and Cys51–Cys74.

Belongs to the DEFL family.

The protein resides in the secreted. This chain is Putative defensin-like protein 137 (LCR14), found in Arabidopsis thaliana (Mouse-ear cress).